Reading from the N-terminus, the 117-residue chain is B-enzyme (117 aa).

Asp89 is a catalytic residue.

It carries out the reaction Hydrolysis of (1-&gt;4)-beta-linkages between N-acetylmuramic acid and N-acetyl-D-glucosamine residues in a peptidoglycan and between N-acetyl-D-glucosamine residues in chitodextrins.. The polypeptide is B-enzyme (lyzB) (Bacillus subtilis).